The sequence spans 250 residues: 3-deoxy-manno-octulosonate cytidylyltransferase (250 aa).

Belongs to the KdsB family.

The protein localises to the cytoplasm. The enzyme catalyses 3-deoxy-alpha-D-manno-oct-2-ulosonate + CTP = CMP-3-deoxy-beta-D-manno-octulosonate + diphosphate. The protein operates within nucleotide-sugar biosynthesis; CMP-3-deoxy-D-manno-octulosonate biosynthesis; CMP-3-deoxy-D-manno-octulosonate from 3-deoxy-D-manno-octulosonate and CTP: step 1/1. It functions in the pathway bacterial outer membrane biogenesis; lipopolysaccharide biosynthesis. Its function is as follows. Activates KDO (a required 8-carbon sugar) for incorporation into bacterial lipopolysaccharide in Gram-negative bacteria. In Rhizobium meliloti (strain 1021) (Ensifer meliloti), this protein is 3-deoxy-manno-octulosonate cytidylyltransferase.